The following is a 606-amino-acid chain: Peptide-N(4)-(N-acetyl-beta-glucosaminyl)asparagine amidase (606 aa).

Residues 2–108 (PVTEVGSLPE…IAEKIRQHYS (107 aa)) form the Thioredoxin domain. Zn(2+) is bound by residues C191, C194, C225, and C228. C251 functions as the Nucleophile in the catalytic mechanism. Catalysis depends on residues H278 and D295. The 203-residue stretch at 404 to 606 (DLGGRITGSE…SFSVKIWMKN (203 aa)) folds into the PAW domain.

This sequence belongs to the transglutaminase-like superfamily. PNGase family. Zn(2+) is required as a cofactor.

It localises to the cytoplasm. Its subcellular location is the endoplasmic reticulum. The enzyme catalyses Hydrolysis of an N(4)-(acetyl-beta-D-glucosaminyl)asparagine residue in which the glucosamine residue may be further glycosylated, to yield a (substituted) N-acetyl-beta-D-glucosaminylamine and a peptide containing an aspartate residue.. With respect to regulation, inhibited by Zn(2+) and z-VAD-fmk (caspase inhibitor) but unaffected by EDTA. Functionally, specifically deglycosylates the denatured form of N-linked glycoproteins in the cytoplasm and assists their proteasome-mediated degradation. Cleaves the beta-aspartyl-glucosamine (GlcNAc) of the glycan and the amide side chain of Asn, converting Asn to Asp. Prefers proteins containing high-mannose over those bearing complex type oligosaccharides. Can recognize misfolded proteins in the endoplasmic reticulum that are exported to the cytosol to be destroyed and deglycosylate them, while it has no activity toward native proteins. Deglycosylation is a prerequisite for subsequent proteasome-mediated degradation of some, but not all, misfolded glycoproteins. Also displays oxidoreductase (thioredoxin) activity. Involved in regulating the expression of proteasomal subunits such as rpt-3 in order to confer resistance to proteasomal dysfunction. The chain is Peptide-N(4)-(N-acetyl-beta-glucosaminyl)asparagine amidase (png-1) from Caenorhabditis elegans.